The chain runs to 873 residues: Leucine--tRNA ligase (873 aa).

The 'HIGH' region motif lies at 42–52; sequence PYPSGKLHMGH. The tract at residues 624–643 is disordered; sequence PVEIGGTEKMSKSKNNGVDP. Positions 632–636 match the 'KMSKS' region motif; sequence KMSKS. Lys635 serves as a coordination point for ATP.

The protein belongs to the class-I aminoacyl-tRNA synthetase family.

It localises to the cytoplasm. The catalysed reaction is tRNA(Leu) + L-leucine + ATP = L-leucyl-tRNA(Leu) + AMP + diphosphate. This Pseudomonas paraeruginosa (strain DSM 24068 / PA7) (Pseudomonas aeruginosa (strain PA7)) protein is Leucine--tRNA ligase.